A 299-amino-acid chain; its full sequence is MAEFPASLLILNGKSTDNLPLREAIMLLREEGMTIHVRITWEKGDAARFVEEARKLGVATVIAGGGDGTINEVSTALIQCEGDDIPALGILPLGTANDFATSVGIPEALDKALKLAIAGNAIAIDMAQVNKQTCFINMATGGFGTRITTETPEKLKAALGGVSYIIHGLMRMDTLQPDRCEIRGENFHWQGDALVIGIGNGRQAGGGQQLCPNALINDGLLQLRIFTGDEIIPTLVSTLKSDEDNPNIIEGASSWFDIQAPHEITFNLDGEPLSGQNFHIEILPAALRCRLPPDCPLLR.

In terms of domain architecture, DAGKc spans 2–133; the sequence is AEFPASLLIL…IDMAQVNKQT (132 aa). ATP-binding positions include Thr40, 66 to 72, and Thr95; that span reads GDGTINE. 3 residues coordinate Mg(2+): Leu215, Asp218, and Leu220. Glu271 functions as the Proton acceptor in the catalytic mechanism.

The protein belongs to the diacylglycerol/lipid kinase family. YegS lipid kinase subfamily. Mg(2+) is required as a cofactor. The cofactor is Ca(2+).

The protein resides in the cytoplasm. Its function is as follows. Probably phosphorylates lipids; the in vivo substrate is unknown. This is Probable lipid kinase YegS from Escherichia coli O6:K15:H31 (strain 536 / UPEC).